The chain runs to 381 residues: GDSL esterase/lipase At3g48460 (381 aa).

Residues 1–26 form the signal peptide; that stretch reads MSSSISPLLTTAISVAILLFSTISTA. Ser45 functions as the Nucleophile in the catalytic mechanism. Residues Asn112, Asn140, and Asn258 are each glycosylated (N-linked (GlcNAc...) asparagine). Catalysis depends on residues Asp344 and His347.

It belongs to the 'GDSL' lipolytic enzyme family.

The protein localises to the secreted. The chain is GDSL esterase/lipase At3g48460 from Arabidopsis thaliana (Mouse-ear cress).